Here is a 304-residue protein sequence, read N- to C-terminus: Dihydroorotate dehydrogenase B (NAD(+)), catalytic subunit (304 aa).

Residues Ser21 and 45 to 46 each bind FMN; that span reads KA. Residues Lys45 and 69 to 73 contribute to the substrate site; that span reads NAIGL. Positions 99 and 127 each coordinate FMN. Residue Asn127 coordinates substrate. The active-site Nucleophile is the Cys130. Residues Lys165 and Ile191 each contribute to the FMN site. 192 to 193 provides a ligand contact to substrate; sequence NT. Residues Gly217, 243–244, and 265–266 each bind FMN; these read GG and GT.

Belongs to the dihydroorotate dehydrogenase family. Type 1 subfamily. Heterotetramer of 2 PyrK and 2 PyrD type B subunits. FMN is required as a cofactor.

The protein localises to the cytoplasm. It carries out the reaction (S)-dihydroorotate + NAD(+) = orotate + NADH + H(+). It participates in pyrimidine metabolism; UMP biosynthesis via de novo pathway; orotate from (S)-dihydroorotate (NAD(+) route): step 1/1. In terms of biological role, catalyzes the conversion of dihydroorotate to orotate with NAD(+) as electron acceptor. This Listeria monocytogenes serotype 4a (strain HCC23) protein is Dihydroorotate dehydrogenase B (NAD(+)), catalytic subunit (pyrD).